The primary structure comprises 65 residues: Small ribosomal subunit protein eS27 (65 aa).

The Zn(2+) site is built by cysteine 20, cysteine 23, cysteine 39, and cysteine 42. A C4-type zinc finger spans residues cysteine 20 to cysteine 42.

This sequence belongs to the eukaryotic ribosomal protein eS27 family. In terms of assembly, part of the 30S ribosomal subunit. The cofactor is Zn(2+).

The sequence is that of Small ribosomal subunit protein eS27 from Pyrococcus abyssi (strain GE5 / Orsay).